We begin with the raw amino-acid sequence, 154 residues long: MMYSIKTRKIRRNKIRLHKGSVREHQERGSDQVRDWIKNSVLKDYGLSSTVRSIKSFSKVSSRCVYGILLERVVYIAPDKFFPFSFVHLSPLHFWINQPAISFSTSLFSLLKVKQNFNLTRHELVLTVRLILIQRQLILILILRVGGGSYTQPS.

It is found in the mitochondrion. This is an uncharacterized protein from Vicia faba (Broad bean).